The sequence spans 244 residues: UL16-binding protein 1 (244 aa).

The N-terminal stretch at 1–25 is a signal peptide; it reads MAAAASPAFLLCLPLLHLLSGWSRA. Residues 26-117 are MHC class I alpha-1 like; sequence GWVDTHCLCY…IQVENLIPIE (92 aa). Residues Cys50 and Cys66 are joined by a disulfide bond. Residue Asn82 is glycosylated (N-linked (GlcNAc...) asparagine). The interval 118-208 is MHC class I alpha-2 like; that stretch reads PLTLQARMSC…MYWEQMLDPT (91 aa). Cys127 and Cys190 are oxidised to a cystine. The GPI-anchor amidated glycine moiety is linked to residue Gly216. Positions 217 to 244 are cleaved as a propeptide — removed in mature form; that stretch reads TTQPKAMATTLSPWSLLIIFLCFILAGR.

This sequence belongs to the MHC class I family. Interacts with KLRK1/NKG2D. Does not bind to beta2-microglobulin. In terms of assembly, (Microbial infection) In CMV-infected cells, interacts with the viral glycoprotein UL16; this interaction causes ULBP1 retention in the endoplasmic reticulum and cis-Golgi and prevents binding to and activation of KLRK1/NKG2D, providing CMV with an immune evasion mechanism. Expressed in T-cells, B-cells, erythroleukemia cell lines and in a wide range of tissues including heart, brain, lung, liver, testis, lymph node, thymus, tonsil and bone marrow. Also found in fetal heart, brain, lung and liver.

The protein localises to the cell membrane. Its subcellular location is the endoplasmic reticulum. In terms of biological role, binds and activates the KLRK1/NKG2D receptor, mediating natural killer cell cytotoxicity. In Homo sapiens (Human), this protein is UL16-binding protein 1 (ULBP1).